Reading from the N-terminus, the 496-residue chain is MLO-like protein 15 (496 aa).

Over 1 to 9 (MAGGGTTLE) the chain is Extracellular. The chain crosses the membrane as a helical span at residues 10 to 30 (YTPTWVVALVCSVIVSISFAV). Residues 31-59 (ERLIHRAGKHFKNNDQKQLFGALQKIKEE) lie on the Cytoplasmic side of the membrane. The chain crosses the membrane as a helical span at residues 60-80 (LMLVGFISLLLSVGQSKIAKI). Residues 81 to 147 (CISKELSEKF…MSLSALHELH (67 aa)) are Extracellular-facing. Residues 148 to 168 (IFIFVLAVAHIIFCLLTIVFG) traverse the membrane as a helical segment. Residues 169–269 (TMKIKQWKKW…KYLMRALNSD (101 aa)) are Cytoplasmic-facing. The chain crosses the membrane as a helical span at residues 270-290 (FKKVVGISWYLWVFVVLFLLL). Position 291 (N291) is a topological domain, extracellular. A helical membrane pass occupies residues 292-312 (IVAWHVYFWLAFIPLILLLAV). At 313 to 355 (GTKLEHIITDLAHEVAEKHIAVEGDLVVRPSDDLFWFQSPRLV) the chain is on the cytoplasmic side. The chain crosses the membrane as a helical span at residues 356-376 (LFLIHFILFQNSFEIAYFFFI). The Extracellular segment spans residues 377–397 (LFQFGWDSCIMDHVKFVIPRL). Residues 398-418 (VIGVIIQLLCSYSTLPLYALV) traverse the membrane as a helical segment. Residues 419–496 (TQMGSSFKGA…KEKSEIAHHD (78 aa)) lie on the Cytoplasmic side of the membrane. Residues 432–453 (EQTQEHLVGWAKMAKRGVKKGA) form a calmodulin-binding region. The interval 454 to 496 (TQVGTSHDATSPRPSIQLNSLLGKGSSQQNQNPKEKSEIAHHD) is disordered. Residues 455–485 (QVGTSHDATSPRPSIQLNSLLGKGSSQQNQN) show a composition bias toward polar residues. Basic and acidic residues predominate over residues 486–496 (PKEKSEIAHHD).

Belongs to the MLO family.

It is found in the membrane. May be involved in modulation of pathogen defense and leaf cell death. Activity seems to be regulated by Ca(2+)-dependent calmodulin binding and seems not to require heterotrimeric G proteins. This is MLO-like protein 15 (MLO15) from Arabidopsis thaliana (Mouse-ear cress).